A 108-amino-acid polypeptide reads, in one-letter code: Thiosulfate sulfurtransferase GlpE (108 aa).

In terms of domain architecture, Rhodanese spans 17–105 (QEKEAVLVDI…WQRQFPAEVA (89 aa)). C65 serves as the catalytic Cysteine persulfide intermediate.

This sequence belongs to the GlpE family.

It is found in the cytoplasm. The enzyme catalyses thiosulfate + hydrogen cyanide = thiocyanate + sulfite + 2 H(+). It carries out the reaction thiosulfate + [thioredoxin]-dithiol = [thioredoxin]-disulfide + hydrogen sulfide + sulfite + 2 H(+). In terms of biological role, transferase that catalyzes the transfer of sulfur from thiosulfate to thiophilic acceptors such as cyanide or dithiols. May function in a CysM-independent thiosulfate assimilation pathway by catalyzing the conversion of thiosulfate to sulfite, which can then be used for L-cysteine biosynthesis. The sequence is that of Thiosulfate sulfurtransferase GlpE from Escherichia coli O45:K1 (strain S88 / ExPEC).